The sequence spans 179 residues: Large ribosomal subunit protein uL5 (179 aa).

This sequence belongs to the universal ribosomal protein uL5 family. As to quaternary structure, part of the 50S ribosomal subunit; part of the 5S rRNA/L5/L18/L25 subcomplex. Contacts the 5S rRNA and the P site tRNA. Forms a bridge to the 30S subunit in the 70S ribosome.

This is one of the proteins that bind and probably mediate the attachment of the 5S RNA into the large ribosomal subunit, where it forms part of the central protuberance. In the 70S ribosome it contacts protein S13 of the 30S subunit (bridge B1b), connecting the 2 subunits; this bridge is implicated in subunit movement. Contacts the P site tRNA; the 5S rRNA and some of its associated proteins might help stabilize positioning of ribosome-bound tRNAs. The chain is Large ribosomal subunit protein uL5 from Bacillus cereus (strain 03BB102).